Here is a 241-residue protein sequence, read N- to C-terminus: F-box protein At3g22350 (241 aa).

In terms of domain architecture, F-box spans 1–44 (MSDLPLDLVEEILSRVSATSLKRLRSTCKQWNTLFKKRSFSQKH).

The sequence is that of F-box protein At3g22350 from Arabidopsis thaliana (Mouse-ear cress).